The chain runs to 700 residues: Elongation factor G (700 aa).

Positions Glu-8–Thr-290 constitute a tr-type G domain. GTP contacts are provided by residues Ala-17–Thr-24, Asp-88–His-92, and Asn-142–Asp-145.

Belongs to the TRAFAC class translation factor GTPase superfamily. Classic translation factor GTPase family. EF-G/EF-2 subfamily.

Its subcellular location is the cytoplasm. In terms of biological role, catalyzes the GTP-dependent ribosomal translocation step during translation elongation. During this step, the ribosome changes from the pre-translocational (PRE) to the post-translocational (POST) state as the newly formed A-site-bound peptidyl-tRNA and P-site-bound deacylated tRNA move to the P and E sites, respectively. Catalyzes the coordinated movement of the two tRNA molecules, the mRNA and conformational changes in the ribosome. This chain is Elongation factor G, found in Haemophilus influenzae (strain 86-028NP).